Consider the following 345-residue polypeptide: Methylthioribose-1-phosphate isomerase (345 aa).

Residues 44–46, arginine 86, and glutamine 194 contribute to the substrate site; that span reads RGA. The active-site Proton donor is the aspartate 235. 245–246 lines the substrate pocket; it reads NK.

The protein belongs to the eIF-2B alpha/beta/delta subunits family. MtnA subfamily.

The catalysed reaction is 5-(methylsulfanyl)-alpha-D-ribose 1-phosphate = 5-(methylsulfanyl)-D-ribulose 1-phosphate. Its pathway is amino-acid biosynthesis; L-methionine biosynthesis via salvage pathway; L-methionine from S-methyl-5-thio-alpha-D-ribose 1-phosphate: step 1/6. Catalyzes the interconversion of methylthioribose-1-phosphate (MTR-1-P) into methylthioribulose-1-phosphate (MTRu-1-P). This chain is Methylthioribose-1-phosphate isomerase, found in Desulfitobacterium hafniense (strain DSM 10664 / DCB-2).